We begin with the raw amino-acid sequence, 584 residues long: Delta 8-(E)-sphingolipid desaturase (584 aa).

In terms of domain architecture, Cytochrome b5 heme-binding spans Lys-7 to Glu-82. Heme-binding residues include His-42 and His-65. The disordered stretch occupies residues Asn-109 to Glu-134. A helical transmembrane segment spans residues Leu-261–Met-281. The Histidine box-1 motif lies at His-293–His-297. Residues Ile-306 to Trp-326 traverse the membrane as a helical segment. A Histidine box-2 motif is present at residues His-330–His-334. 3 helical membrane-spanning segments follow: residues Tyr-386–Ser-403, Tyr-423–Lys-443, and Val-455–Ala-475. The Histidine box-3 motif lies at Gln-514 to His-518.

Belongs to the fatty acid desaturase type 1 family.

Its subcellular location is the membrane. It catalyses the reaction an N-acylsphing-4-enine + 2 Fe(II)-[cytochrome b5] + O2 + 2 H(+) = a (4E,8E)-4-sphinga-4,8-dienine ceramide + 2 Fe(III)-[cytochrome b5] + 2 H2O. It functions in the pathway lipid metabolism; sphingolipid metabolism. Its function is as follows. Delta(8)-fatty-acid desaturase which introduces a double bond at the 8-position in the long-chain base (LCB) of ceramides. Required for the formation of the di-unsaturated sphingoid base (E,E)-sphinga-4,8-dienine during glucosylceramide (GluCer) biosynthesis. The sequence is that of Delta 8-(E)-sphingolipid desaturase from Candida albicans (strain SC5314 / ATCC MYA-2876) (Yeast).